Consider the following 152-residue polypeptide: Dynein light chain Tctex-type protein 2B (152 aa).

It belongs to the dynein light chain Tctex-type family. Light chain of the cytoplasmic dynein complex 2, a multisubunit complex composed at least of eleven different proteins. The cytoplasmic dynein 2 complex consists of two catalytic heavy chains (HCs) and a number of non-catalytic subunits presented by intermediate chains (ICs), light intermediate chains (LICs) and light chains (LCs). Among them, a heavy chain (DYNC2H1), two intermediate chains (DYNC2I2 and DYNC2I1), a light intermediate chain (DYNC2LI1), and a light chain (DYNLT2B) are unique to the dynein-2 complex, but a subset of the light chains are also shared by dynein-1 and dynein-2 complexes. The dimer DYNLT2B-DYNLT1/DYNLT3 interacts with DYNC2I1; this interaction is crucial for retrograde trafficking of ciliary proteins.

It localises to the dynein axonemal particle. Functionally, acts as one of several non-catalytic accessory components of the cytoplasmic dynein 2 complex (dynein-2 complex), a motor protein complex that drives the movement of cargos along microtubules within cilia and flagella in concert with the intraflagellar transport (IFT) system. Required for proper retrograde ciliary transport. The chain is Dynein light chain Tctex-type protein 2B (DYNLT2B) from Bos taurus (Bovine).